Consider the following 666-residue polypeptide: Calpain-10 (666 aa).

A Calpain catalytic domain is found at 13–321; sequence LFRDAAFPAS…FDEVTIGYPV (309 aa). Residues Cys73, His238, and Asn263 contribute to the active site. Domain III regions lie at residues 322 to 488 and 507 to 648; these read TEAG…ISLS and EWET…IHSQ.

It belongs to the peptidase C2 family.

In terms of biological role, calcium-regulated non-lysosomal thiol-protease which catalyzes limited proteolysis of substrates involved in cytoskeletal remodeling and signal transduction. May play a role in insulin-stimulated glucose uptake. This chain is Calpain-10 (Capn10), found in Mus musculus (Mouse).